Consider the following 569-residue polypeptide: Oxygen-dependent choline dehydrogenase (569 aa).

An FAD-binding site is contributed by 9–38 (DYVIIGGGSAGSVLGNRLSEDKDKEVLVLE). Catalysis depends on histidine 475, which acts as the Proton acceptor.

The protein belongs to the GMC oxidoreductase family. It depends on FAD as a cofactor.

The enzyme catalyses choline + A = betaine aldehyde + AH2. It catalyses the reaction betaine aldehyde + NAD(+) + H2O = glycine betaine + NADH + 2 H(+). It functions in the pathway amine and polyamine biosynthesis; betaine biosynthesis via choline pathway; betaine aldehyde from choline (cytochrome c reductase route): step 1/1. In terms of biological role, involved in the biosynthesis of the osmoprotectant glycine betaine. Catalyzes the oxidation of choline to betaine aldehyde and betaine aldehyde to glycine betaine at the same rate. The protein is Oxygen-dependent choline dehydrogenase of Staphylococcus aureus (strain COL).